The following is a 241-amino-acid chain: Small ribosomal subunit protein uS3 (241 aa).

In terms of domain architecture, KH type-2 spans 39-107 (MRKFVMDELK…ETHLNIVEVR (69 aa)). A disordered region spans residues 214–241 (ASERRALEGDAQGPASRDRDRDRRRDNA). Basic and acidic residues predominate over residues 229-241 (SRDRDRDRRRDNA).

The protein belongs to the universal ribosomal protein uS3 family. Part of the 30S ribosomal subunit. Forms a tight complex with proteins S10 and S14.

In terms of biological role, binds the lower part of the 30S subunit head. Binds mRNA in the 70S ribosome, positioning it for translation. This Rhizobium rhizogenes (strain K84 / ATCC BAA-868) (Agrobacterium radiobacter) protein is Small ribosomal subunit protein uS3.